The primary structure comprises 548 residues: Chaperonin GroEL (548 aa).

ATP contacts are provided by residues T30–P33, K51, D87–T91, G415, N479–A481, and D495.

It belongs to the chaperonin (HSP60) family. Forms a cylinder of 14 subunits composed of two heptameric rings stacked back-to-back. Interacts with the co-chaperonin GroES. In terms of processing, UMPylated on a tyrosine residue by YdiU under ATP-limited conditions.

It localises to the cytoplasm. It catalyses the reaction ATP + H2O + a folded polypeptide = ADP + phosphate + an unfolded polypeptide.. With respect to regulation, UMPylation of the chaperone by YdiU negatively regulates its activity, facilitating Salmonella survival under ATP-limited conditions. Together with its co-chaperonin GroES, plays an essential role in assisting protein folding. The GroEL-GroES system forms a nano-cage that allows encapsulation of the non-native substrate proteins and provides a physical environment optimized to promote and accelerate protein folding. The sequence is that of Chaperonin GroEL from Salmonella typhimurium (strain LT2 / SGSC1412 / ATCC 700720).